A 931-amino-acid polypeptide reads, in one-letter code: Isoleucine--tRNA ligase (931 aa).

Positions 57 to 67 match the 'HIGH' region motif; sequence PFANGNIHMGH. Glu-556 is an L-isoleucyl-5'-AMP binding site. Positions 597-601 match the 'KMSKS' region motif; that stretch reads KMSKS. Lys-600 is a binding site for ATP. Zn(2+) contacts are provided by Cys-890, Cys-893, Cys-910, and Cys-913.

This sequence belongs to the class-I aminoacyl-tRNA synthetase family. IleS type 1 subfamily. Monomer. It depends on Zn(2+) as a cofactor.

Its subcellular location is the cytoplasm. It catalyses the reaction tRNA(Ile) + L-isoleucine + ATP = L-isoleucyl-tRNA(Ile) + AMP + diphosphate. Functionally, catalyzes the attachment of isoleucine to tRNA(Ile). As IleRS can inadvertently accommodate and process structurally similar amino acids such as valine, to avoid such errors it has two additional distinct tRNA(Ile)-dependent editing activities. One activity is designated as 'pretransfer' editing and involves the hydrolysis of activated Val-AMP. The other activity is designated 'posttransfer' editing and involves deacylation of mischarged Val-tRNA(Ile). This is Isoleucine--tRNA ligase from Lactobacillus delbrueckii subsp. bulgaricus (strain ATCC BAA-365 / Lb-18).